Here is a 691-residue protein sequence, read N- to C-terminus: Elongation factor G (691 aa).

The region spanning 10-284 (KMYRNIGIMA…AIVKYLPSPL (275 aa)) is the tr-type G domain. GTP contacts are provided by residues 19 to 26 (AHIDAGKT), 83 to 87 (DTPGH), and 137 to 140 (NKMD).

It belongs to the TRAFAC class translation factor GTPase superfamily. Classic translation factor GTPase family. EF-G/EF-2 subfamily.

The protein resides in the cytoplasm. Functionally, catalyzes the GTP-dependent ribosomal translocation step during translation elongation. During this step, the ribosome changes from the pre-translocational (PRE) to the post-translocational (POST) state as the newly formed A-site-bound peptidyl-tRNA and P-site-bound deacylated tRNA move to the P and E sites, respectively. Catalyzes the coordinated movement of the two tRNA molecules, the mRNA and conformational changes in the ribosome. The sequence is that of Elongation factor G from Clostridium tetani (strain Massachusetts / E88).